Here is a 451-residue protein sequence, read N- to C-terminus: tRNA modification GTPase MnmE (451 aa).

The (6S)-5-formyl-5,6,7,8-tetrahydrofolate site is built by Arg-23, Glu-80, and Lys-119. The TrmE-type G domain occupies 215 to 372 (GIKVVLTGQP…LRTVLLKTVG (158 aa)). K(+) is bound at residue Asn-225. GTP-binding positions include 225–230 (NVGKSS), 244–250 (TEIPGTT), and 269–272 (DTAG). Ser-229 serves as a coordination point for Mg(2+). Residues Thr-244, Ile-246, and Thr-249 each contribute to the K(+) site. Residue Thr-250 coordinates Mg(2+). Lys-451 is a binding site for (6S)-5-formyl-5,6,7,8-tetrahydrofolate.

This sequence belongs to the TRAFAC class TrmE-Era-EngA-EngB-Septin-like GTPase superfamily. TrmE GTPase family. In terms of assembly, homodimer. Heterotetramer of two MnmE and two MnmG subunits. K(+) serves as cofactor.

It is found in the cytoplasm. Exhibits a very high intrinsic GTPase hydrolysis rate. Involved in the addition of a carboxymethylaminomethyl (cmnm) group at the wobble position (U34) of certain tRNAs, forming tRNA-cmnm(5)s(2)U34. This chain is tRNA modification GTPase MnmE, found in Nitrosomonas eutropha (strain DSM 101675 / C91 / Nm57).